We begin with the raw amino-acid sequence, 128 residues long: Small ribosomal subunit protein eS8 (128 aa).

The segment at 1–31 (MAWYQGNDLRKPTGGKKTRHRKKRKHELGRP) is disordered. A compositionally biased stretch (basic residues) spans 13–27 (TGGKKTRHRKKRKHE).

Belongs to the eukaryotic ribosomal protein eS8 family. As to quaternary structure, part of the 30S ribosomal subunit.

The chain is Small ribosomal subunit protein eS8 from Staphylothermus marinus (strain ATCC 43588 / DSM 3639 / JCM 9404 / F1).